We begin with the raw amino-acid sequence, 169 residues long: Phosphopantetheine adenylyltransferase (169 aa).

Threonine 13 lines the substrate pocket. ATP is bound by residues 13 to 14 and histidine 21; that span reads TF. Substrate-binding residues include lysine 45, leucine 82, and arginine 96. Residues 97–99, glutamate 107, and 132–138 each bind ATP; these read GLR and HQFISSR.

It belongs to the bacterial CoaD family. Homohexamer. It depends on Mg(2+) as a cofactor.

It localises to the cytoplasm. It catalyses the reaction (R)-4'-phosphopantetheine + ATP + H(+) = 3'-dephospho-CoA + diphosphate. The protein operates within cofactor biosynthesis; coenzyme A biosynthesis; CoA from (R)-pantothenate: step 4/5. In terms of biological role, reversibly transfers an adenylyl group from ATP to 4'-phosphopantetheine, yielding dephospho-CoA (dPCoA) and pyrophosphate. This Acidiphilium cryptum (strain JF-5) protein is Phosphopantetheine adenylyltransferase.